The primary structure comprises 219 residues: Albonoursin synthase (219 aa).

It belongs to the nitroreductase family. In terms of assembly, homomer. It depends on FMN as a cofactor. In terms of processing, the N-terminus is blocked.

Its subcellular location is the cytoplasm. It catalyses the reaction cyclo(L-phenylalanyl-L-leucyl) + 2 O2 = albonoursin + 2 H2O2. In terms of biological role, involved in the biosynthesis of albonoursin (cyclo[(alpha,beta-dehydro-Phe)-(alpha,beta-dehydro-Leu)]), an antibacterial peptide. Catalyzes the formation of alpha,beta-dehydro-Phe (DPhe) and alpha,beta-dehydro-Leu (DLeu) residues during the biosynthesis of albonoursin. The catalytic reaction of cyclo(L-Phe-L-Leu) occurs in a two-step sequential alpha-beta-dehydrogenation leading first to cyclo(alpha,beta-dehydro-Phe-L-Leu) and finally to albonoursin. Can also use cyclo(L-Phe-L-His), cyclo(L-Trp-L-Trp), cyclo(L-Leu-L-Ala), cyclo(L-Phe-Gly), cyclo(L-Leu-Gly), cyclo(L-Ser-Gly) and cyclo(L-Glu-Gly) as substrate suggesting that the diketopiperazine ring is essential for the enzymatic reaction. The chain is Albonoursin synthase (albA) from Streptomyces noursei (Streptomyces albulus).